The following is a 359-amino-acid chain: Oxopyrrolidines biosynthesis cluster protein G (359 aa).

The interval 1 to 32 (MDHLRDSLLSSLPRDSPSIGAMDYARRDREST) is disordered. Residues 7-18 (SLLSSLPRDSPS) show a composition bias toward low complexity.

Part of the gene cluster that mediates the biosynthesis of oxopyrrolidines, polyketide-amino acid hybrid compounds with feature structures of tetramic acid. Does not seem to play a role in oxopyrrolidines A and B biosynthesis. The polypeptide is Oxopyrrolidines biosynthesis cluster protein G (Penicillium oxalicum (strain 114-2 / CGMCC 5302) (Penicillium decumbens)).